The sequence spans 472 residues: Aspartyl/glutamyl-tRNA(Asn/Gln) amidotransferase subunit B (472 aa).

It belongs to the GatB/GatE family. GatB subfamily. Heterotrimer of A, B and C subunits.

It carries out the reaction L-glutamyl-tRNA(Gln) + L-glutamine + ATP + H2O = L-glutaminyl-tRNA(Gln) + L-glutamate + ADP + phosphate + H(+). The catalysed reaction is L-aspartyl-tRNA(Asn) + L-glutamine + ATP + H2O = L-asparaginyl-tRNA(Asn) + L-glutamate + ADP + phosphate + 2 H(+). In terms of biological role, allows the formation of correctly charged Asn-tRNA(Asn) or Gln-tRNA(Gln) through the transamidation of misacylated Asp-tRNA(Asn) or Glu-tRNA(Gln) in organisms which lack either or both of asparaginyl-tRNA or glutaminyl-tRNA synthetases. The reaction takes place in the presence of glutamine and ATP through an activated phospho-Asp-tRNA(Asn) or phospho-Glu-tRNA(Gln). This is Aspartyl/glutamyl-tRNA(Asn/Gln) amidotransferase subunit B from Campylobacter jejuni subsp. doylei (strain ATCC BAA-1458 / RM4099 / 269.97).